Reading from the N-terminus, the 472-residue chain is Coenzyme F(430) synthetase (472 aa).

119-125 is an ATP binding site; sequence GVKAKTS.

It belongs to the MurCDEF family.

The enzyme catalyses 15,17(3)-seco-F430-17(3)-acid + ATP = coenzyme F430 + ADP + phosphate. Its function is as follows. Involved in the biosynthesis of the unique nickel-containing tetrapyrrole coenzyme F430, the prosthetic group of methyl-coenzyme M reductase (MCR), which plays a key role in methanogenesis and anaerobic methane oxidation. Catalyzes the activation the g-propionate side chain of 15,17(3)-seco-F430-17(3)-acid (seco-F430) for intramolecular C-C bond formation to yield the carbocyclic F ring of coenzyme F430. The chain is Coenzyme F(430) synthetase from Methanosarcina acetivorans (strain ATCC 35395 / DSM 2834 / JCM 12185 / C2A).